Here is a 476-residue protein sequence, read N- to C-terminus: Stromelysin-2 (476 aa).

Residues 1-17 (MEPLAILVLLCFPICSA) form the signal peptide. Positions 18–99 (YPLHGAVRQD…PRCGVPDVGG (82 aa)) are cleaved as a propeptide — activation peptide. Residues 90–97 (PRCGVPDV) carry the Cysteine switch motif. Zn(2+)-binding residues include Cys92, His168, Asp170, His183, His196, and His218. The active site involves Glu219. The Zn(2+) site is built by His222 and His228. 4 Hemopexin repeats span residues 286 to 335 (PVKC…WPSL), 336 to 382 (PSGL…GFPP), 384 to 432 (VKKI…FPGI), and 433 to 476 (EPQV…WLLC). A disulfide bridge connects residues Cys289 and Cys476.

This sequence belongs to the peptidase M10A family. Requires Zn(2+) as cofactor. Ca(2+) is required as a cofactor.

The protein localises to the secreted. It is found in the extracellular space. The protein resides in the extracellular matrix. It catalyses the reaction Similar to stromelysin 1, but action on collagen types III, IV and V is weak.. In terms of biological role, can degrade fibronectin, gelatins of type I, III, IV, and V; weakly collagens III, IV, and V. Activates procollagenase. This is Stromelysin-2 (Mmp10) from Rattus norvegicus (Rat).